The primary structure comprises 334 residues: Holliday junction branch migration complex subunit RuvB (334 aa).

Residues Ala-4 to Tyr-186 are large ATPase domain (RuvB-L). ATP is bound by residues Ile-25, Arg-26, Gly-67, Lys-70, Thr-71, Thr-72, Glu-133–Tyr-135, Arg-176, Tyr-186, and Arg-223. Thr-71 contributes to the Mg(2+) binding site. The tract at residues Lys-187 to Asp-257 is small ATPAse domain (RuvB-S). The tract at residues His-260–Lys-334 is head domain (RuvB-H). The DNA site is built by Arg-315 and Arg-320.

The protein belongs to the RuvB family. Homohexamer. Forms an RuvA(8)-RuvB(12)-Holliday junction (HJ) complex. HJ DNA is sandwiched between 2 RuvA tetramers; dsDNA enters through RuvA and exits via RuvB. An RuvB hexamer assembles on each DNA strand where it exits the tetramer. Each RuvB hexamer is contacted by two RuvA subunits (via domain III) on 2 adjacent RuvB subunits; this complex drives branch migration. In the full resolvosome a probable DNA-RuvA(4)-RuvB(12)-RuvC(2) complex forms which resolves the HJ.

The protein localises to the cytoplasm. It catalyses the reaction ATP + H2O = ADP + phosphate + H(+). Functionally, the RuvA-RuvB-RuvC complex processes Holliday junction (HJ) DNA during genetic recombination and DNA repair, while the RuvA-RuvB complex plays an important role in the rescue of blocked DNA replication forks via replication fork reversal (RFR). RuvA specifically binds to HJ cruciform DNA, conferring on it an open structure. The RuvB hexamer acts as an ATP-dependent pump, pulling dsDNA into and through the RuvAB complex. RuvB forms 2 homohexamers on either side of HJ DNA bound by 1 or 2 RuvA tetramers; 4 subunits per hexamer contact DNA at a time. Coordinated motions by a converter formed by DNA-disengaged RuvB subunits stimulates ATP hydrolysis and nucleotide exchange. Immobilization of the converter enables RuvB to convert the ATP-contained energy into a lever motion, pulling 2 nucleotides of DNA out of the RuvA tetramer per ATP hydrolyzed, thus driving DNA branch migration. The RuvB motors rotate together with the DNA substrate, which together with the progressing nucleotide cycle form the mechanistic basis for DNA recombination by continuous HJ branch migration. Branch migration allows RuvC to scan DNA until it finds its consensus sequence, where it cleaves and resolves cruciform DNA. This chain is Holliday junction branch migration complex subunit RuvB, found in Vibrio cholerae serotype O1 (strain ATCC 39315 / El Tor Inaba N16961).